Consider the following 64-residue polypeptide: Metallothionein-like protein 1 (64 aa).

The protein belongs to the metallothionein superfamily. Type 15 family.

Its function is as follows. Metallothioneins have a high content of cysteine residues that bind various heavy metals. This is Metallothionein-like protein 1 (MT1) from Prunus avium (Cherry).